The sequence spans 255 residues: GTP cyclohydrolase III (255 aa).

It belongs to the archaeal-type GTP cyclohydrolase family.

The enzyme catalyses GTP + 3 H2O = 2-amino-5-formylamino-6-(5-phospho-D-ribosylamino)pyrimidin-4(3H)-one + 2 phosphate + 2 H(+). Its function is as follows. Catalyzes the formation of 2-amino-5-formylamino-6-ribofuranosylamino-4(3H)-pyrimidinone ribonucleotide monophosphate and inorganic phosphate from GTP. Also has an independent pyrophosphate phosphohydrolase activity. This chain is GTP cyclohydrolase III, found in Methanosphaera stadtmanae (strain ATCC 43021 / DSM 3091 / JCM 11832 / MCB-3).